We begin with the raw amino-acid sequence, 253 residues long: Triosephosphate isomerase (253 aa).

15–17 (NWK) contributes to the substrate binding site. His101 serves as the catalytic Electrophile. Glu171 acts as the Proton acceptor in catalysis. Residues Gly177, Ser216, and 237–238 (GG) each bind substrate.

This sequence belongs to the triosephosphate isomerase family. Homodimer.

The protein resides in the cytoplasm. The enzyme catalyses D-glyceraldehyde 3-phosphate = dihydroxyacetone phosphate. It functions in the pathway carbohydrate biosynthesis; gluconeogenesis. It participates in carbohydrate degradation; glycolysis; D-glyceraldehyde 3-phosphate from glycerone phosphate: step 1/1. In terms of biological role, involved in the gluconeogenesis. Catalyzes stereospecifically the conversion of dihydroxyacetone phosphate (DHAP) to D-glyceraldehyde-3-phosphate (G3P). This chain is Triosephosphate isomerase, found in Caulobacter vibrioides (strain ATCC 19089 / CIP 103742 / CB 15) (Caulobacter crescentus).